The following is a 363-amino-acid chain: Chorismate synthase (363 aa).

Position 48 (R48) interacts with NADP(+). Residues 125 to 127 (RSS), 238 to 239 (NA), G278, 293 to 297 (KPTAS), and R319 each bind FMN.

This sequence belongs to the chorismate synthase family. As to quaternary structure, homotetramer. FMNH2 serves as cofactor.

The enzyme catalyses 5-O-(1-carboxyvinyl)-3-phosphoshikimate = chorismate + phosphate. Its pathway is metabolic intermediate biosynthesis; chorismate biosynthesis; chorismate from D-erythrose 4-phosphate and phosphoenolpyruvate: step 7/7. Catalyzes the anti-1,4-elimination of the C-3 phosphate and the C-6 proR hydrogen from 5-enolpyruvylshikimate-3-phosphate (EPSP) to yield chorismate, which is the branch point compound that serves as the starting substrate for the three terminal pathways of aromatic amino acid biosynthesis. This reaction introduces a second double bond into the aromatic ring system. The polypeptide is Chorismate synthase (Acinetobacter baumannii (strain AB0057)).